The sequence spans 509 residues: Sulfoacetate--CoA ligase (509 aa).

Residues 320 to 340 (AFSNPLDPGQRRIGSIGRPSG) are disordered.

It belongs to the ATP-dependent AMP-binding enzyme family.

It is found in the cytoplasm. The catalysed reaction is sulfoacetate + ATP + CoA = sulfoacetyl-CoA + AMP + diphosphate. Involved in the degradation of sulfoacetate, a widespread natural product. Catalyzes the CoA- and ATP-dependent conversion of sulfoacetate to sulfoacetyl-CoA and AMP. The polypeptide is Sulfoacetate--CoA ligase (Cupriavidus necator (strain ATCC 17699 / DSM 428 / KCTC 22496 / NCIMB 10442 / H16 / Stanier 337) (Ralstonia eutropha)).